The sequence spans 84 residues: U21-theraphotoxin-Cg1a 2 (84 aa).

Residues 1–21 form the signal peptide; that stretch reads MKVSVLITLAVLGVMFLFTSA. The propeptide occupies 22-47; sequence EERGSDQMDSPAWLKSMEIIFQSEER. Cystine bridges form between cysteine 49–cysteine 63, cysteine 56–cysteine 68, and cysteine 62–cysteine 76. Valine 82 bears the Valine amide mark.

This sequence belongs to the neurotoxin 10 (Hwtx-1) family. 05 (F4a) subfamily. Expressed by the venom gland.

It is found in the secreted. Probable ion channel inhibitor. This Chilobrachys guangxiensis (Chinese earth tiger tarantula) protein is U21-theraphotoxin-Cg1a 2.